A 140-amino-acid polypeptide reads, in one-letter code: Large ribosomal subunit protein uL14 (140 aa).

Belongs to the universal ribosomal protein uL14 family. As to quaternary structure, component of the large ribosomal subunit.

It localises to the cytoplasm. Its function is as follows. Component of the large ribosomal subunit. The ribosome is a large ribonucleoprotein complex responsible for the synthesis of proteins in the cell. This is Large ribosomal subunit protein uL14 (rpl23) from Danio rerio (Zebrafish).